The chain runs to 406 residues: Endo-xylogalacturonan hydrolase A (406 aa).

The N-terminal stretch at 1–18 (MALYRNLYLLASLGLSSA) is a signal peptide. PbH1 repeat units lie at residues 183-213 (ATNV…DIGE), 214-257 (STYV…SVGS), 266-289 (VKNI…KTYP), 299-320 (VSNV…QIQS), and 333-375 (PGNA…SISG). Catalysis depends on Asp-228, which acts as the Proton donor. The active site involves His-251. 2 N-linked (GlcNAc...) asparagine glycosylation sites follow: Asn-278 and Asn-301.

The protein belongs to the glycosyl hydrolase 28 family.

The protein resides in the secreted. Pectinolytic enzyme involved in the degradation of xylogalacturonan (xga), a galacturonan backbone heavily substituted with xylose, and which is one important component of the hairy regions of pectin. Activity requires a galacturonic acid backbone substituted with xylose. The protein is Endo-xylogalacturonan hydrolase A (xghA) of Aspergillus tubingensis.